We begin with the raw amino-acid sequence, 58 residues long: Ribosome modulation factor (58 aa).

Residues Met1–Asn28 are disordered.

This sequence belongs to the ribosome modulation factor family.

It is found in the cytoplasm. Its function is as follows. During stationary phase, converts 70S ribosomes to an inactive dimeric form (100S ribosomes). In Idiomarina loihiensis (strain ATCC BAA-735 / DSM 15497 / L2-TR), this protein is Ribosome modulation factor.